The primary structure comprises 230 residues: Heptaprenylglyceryl phosphate synthase (230 aa).

K12 serves as a coordination point for sn-glycerol 1-phosphate. The Mg(2+) site is built by D14 and T40. Sn-glycerol 1-phosphate contacts are provided by residues 159 to 164 (YIEYSG), G189, and 209 to 210 (GD).

Belongs to the GGGP/HepGP synthase family. Group I subfamily. In terms of assembly, homodimer. Mg(2+) is required as a cofactor.

The catalysed reaction is sn-glycerol 1-phosphate + all-trans-heptaprenyl diphosphate = 3-heptaprenyl-sn-glycero-1-phosphate + diphosphate. The protein operates within membrane lipid metabolism; glycerophospholipid metabolism. Prenyltransferase that catalyzes in vivo the transfer of the heptaprenyl moiety of heptaprenyl pyrophosphate (HepPP; 35 carbon atoms) to the C3 hydroxyl of sn-glycerol-1-phosphate (G1P), producing heptaprenylglyceryl phosphate (HepGP). This reaction is an ether-bond-formation step in the biosynthesis of archaea-type G1P-based membrane lipids found in Bacillales. The chain is Heptaprenylglyceryl phosphate synthase from Staphylococcus aureus (strain JH1).